Here is a 416-residue protein sequence, read N- to C-terminus: Imidazolonepropionase (416 aa).

The Fe(3+) site is built by histidine 78 and histidine 80. Zn(2+)-binding residues include histidine 78 and histidine 80. Residues arginine 87, tyrosine 150, and histidine 183 each coordinate 4-imidazolone-5-propanoate. Tyrosine 150 contacts N-formimidoyl-L-glutamate. A Fe(3+)-binding site is contributed by histidine 248. Position 248 (histidine 248) interacts with Zn(2+). Glutamine 251 contributes to the 4-imidazolone-5-propanoate binding site. Aspartate 323 serves as a coordination point for Fe(3+). Aspartate 323 serves as a coordination point for Zn(2+). Residues asparagine 325 and glycine 327 each contribute to the N-formimidoyl-L-glutamate site. Threonine 328 lines the 4-imidazolone-5-propanoate pocket.

This sequence belongs to the metallo-dependent hydrolases superfamily. HutI family. It depends on Zn(2+) as a cofactor. The cofactor is Fe(3+).

Its subcellular location is the cytoplasm. The enzyme catalyses 4-imidazolone-5-propanoate + H2O = N-formimidoyl-L-glutamate. Its pathway is amino-acid degradation; L-histidine degradation into L-glutamate; N-formimidoyl-L-glutamate from L-histidine: step 3/3. Catalyzes the hydrolytic cleavage of the carbon-nitrogen bond in imidazolone-5-propanoate to yield N-formimidoyl-L-glutamate. It is the third step in the universal histidine degradation pathway. The sequence is that of Imidazolonepropionase from Vibrio parahaemolyticus serotype O3:K6 (strain RIMD 2210633).